A 307-amino-acid chain; its full sequence is UDP-3-O-acyl-N-acetylglucosamine deacetylase (307 aa).

3 residues coordinate Zn(2+): H78, H241, and D245. H268 serves as the catalytic Proton donor.

It belongs to the LpxC family. Zn(2+) serves as cofactor.

It catalyses the reaction a UDP-3-O-[(3R)-3-hydroxyacyl]-N-acetyl-alpha-D-glucosamine + H2O = a UDP-3-O-[(3R)-3-hydroxyacyl]-alpha-D-glucosamine + acetate. It functions in the pathway glycolipid biosynthesis; lipid IV(A) biosynthesis; lipid IV(A) from (3R)-3-hydroxytetradecanoyl-[acyl-carrier-protein] and UDP-N-acetyl-alpha-D-glucosamine: step 2/6. Catalyzes the hydrolysis of UDP-3-O-myristoyl-N-acetylglucosamine to form UDP-3-O-myristoylglucosamine and acetate, the committed step in lipid A biosynthesis. The sequence is that of UDP-3-O-acyl-N-acetylglucosamine deacetylase from Variovorax paradoxus (strain S110).